We begin with the raw amino-acid sequence, 332 residues long: L-lactate dehydrogenase A chain (332 aa).

The residue at position 2 (A2) is an N-acetylalanine. At K5 the chain carries N6-acetyllysine; alternate. K5 is modified (N6-succinyllysine; alternate). Position 14 is an N6-acetyllysine (K14). Position 29–57 (29–57 (GAVGMACAISILMKDLADELALVDVIEDK)) interacts with NAD(+). K57 is modified (N6-acetyllysine; alternate). Residue K57 forms a Glycyl lysine isopeptide (Lys-Gly) (interchain with G-Cter in SUMO2); alternate linkage. K81 is modified (N6-acetyllysine). An NAD(+)-binding site is contributed by R99. R106 is a substrate binding site. N6-acetyllysine; alternate is present on K118. At K118 the chain carries N6-succinyllysine; alternate. At K126 the chain carries N6-acetyllysine. N138 lines the NAD(+) pocket. 2 residues coordinate substrate: N138 and R169. H193 acts as the Proton acceptor in catalysis. The residue at position 213 (S213) is a Phosphoserine. An N6-acetyllysine mark is found at K224 and K232. Position 239 is a phosphotyrosine (Y239). K243 carries the N6-acetyllysine modification. Residue T248 participates in substrate binding. T309 is subject to Phosphothreonine. N6-acetyllysine; alternate is present on K318. An N6-succinyllysine; alternate modification is found at K318. Phosphothreonine is present on T322.

The protein belongs to the LDH/MDH superfamily. LDH family. Homotetramer. Interacts with PTEN upstream reading frame protein MP31. In terms of processing, ISGylated.

Its subcellular location is the cytoplasm. It catalyses the reaction (S)-lactate + NAD(+) = pyruvate + NADH + H(+). It functions in the pathway fermentation; pyruvate fermentation to lactate; (S)-lactate from pyruvate: step 1/1. Functionally, interconverts simultaneously and stereospecifically pyruvate and lactate with concomitant interconversion of NADH and NAD(+). The sequence is that of L-lactate dehydrogenase A chain (Ldha) from Rattus norvegicus (Rat).